Reading from the N-terminus, the 305-residue chain is Oxidoreductase OpS7 (305 aa).

The protein belongs to the oxidoreductase OpS7 family.

It functions in the pathway secondary metabolite biosynthesis. Oxidoreductase; part of the gene cluster that mediates the biosynthesis of the bibenzoquinone oosporein, a metabolite required for fungal virulence that acts by evading host immunity to facilitate fungal multiplication in insects. The non-reducing polyketide synthase OpS1 produces orsellinic acid by condensing acetyl-CoA with 3 malonyl-CoA units. Orsellinic acid is then hydroxylated to benzenetriol by the hydroxylase OpS4. The intermediate is oxidized either nonenzymatically to 5,5'-dideoxy-oosporein or enzymatically to benzenetetrol by the oxidoreductase OpS7. The latter is further dimerized to oosporein by the catalase OpS5. OpS6 probably functions en route for protecting cells against oxidative stress by scavenging any leaked free radical form of benzenetetrol by activating the thiol group of glutathione. The sequence is that of Oxidoreductase OpS7 from Beauveria bassiana (strain ARSEF 2860) (White muscardine disease fungus).